The primary structure comprises 494 residues: Gram-negative bacteria-binding protein 1 (494 aa).

An N-terminal signal peptide occupies residues 1 to 19 (MPGLCIGILLLIGFGCTTA). One can recognise a CBM39 domain in the interval 20–120 (YKIPTPTVEL…QPLPVCNLGG (101 aa)). N56 and N81 each carry an N-linked (GlcNAc...) asparagine glycan. The interval 126-160 (GCSPGDDDFTDDNQLSTEDSALEPTAPSVCEPSES) is disordered. In terms of domain architecture, GH16 spans 135–494 (TDDNQLSTED…DYVRVFATDN (360 aa)). N185 carries an N-linked (GlcNAc...) asparagine glycan.

Belongs to the insect beta-1,3-glucan binding protein family.

Its subcellular location is the cell membrane. In terms of biological role, plays a key role in innate immunity by acting as a pattern recognition receptor for beta-1,3-glucan from fungi and lipopolysaccharide from Gram-negative bacteria. Upon recognition of invading microorganism-derived products, acts upstream of protease spz processing enzyme SPE to activate the Toll pathway and to induce the expression of antimicrobial peptides drosomycin, cecropin and attacin. This chain is Gram-negative bacteria-binding protein 1, found in Drosophila melanogaster (Fruit fly).